A 425-amino-acid chain; its full sequence is Serine--tRNA ligase (425 aa).

233-235 (TAE) serves as a coordination point for L-serine. Position 264 to 266 (264 to 266 (RRE)) interacts with ATP. L-serine is bound at residue Glu-287. 351–354 (EISS) provides a ligand contact to ATP. Ser-385 is an L-serine binding site.

The protein belongs to the class-II aminoacyl-tRNA synthetase family. Type-1 seryl-tRNA synthetase subfamily. In terms of assembly, homodimer. The tRNA molecule binds across the dimer.

It is found in the cytoplasm. The enzyme catalyses tRNA(Ser) + L-serine + ATP = L-seryl-tRNA(Ser) + AMP + diphosphate + H(+). The catalysed reaction is tRNA(Sec) + L-serine + ATP = L-seryl-tRNA(Sec) + AMP + diphosphate + H(+). The protein operates within aminoacyl-tRNA biosynthesis; selenocysteinyl-tRNA(Sec) biosynthesis; L-seryl-tRNA(Sec) from L-serine and tRNA(Sec): step 1/1. In terms of biological role, catalyzes the attachment of serine to tRNA(Ser). Is also able to aminoacylate tRNA(Sec) with serine, to form the misacylated tRNA L-seryl-tRNA(Sec), which will be further converted into selenocysteinyl-tRNA(Sec). The chain is Serine--tRNA ligase from Parasynechococcus marenigrum (strain WH8102).